The chain runs to 144 residues: Deoxyuridine 5'-triphosphate nucleotidohydrolase (144 aa).

Substrate contacts are provided by residues Arg63–Gly65, Asn76, and Thr80–Asp82.

Belongs to the dUTPase family. Mg(2+) serves as cofactor.

It carries out the reaction dUTP + H2O = dUMP + diphosphate + H(+). The protein operates within pyrimidine metabolism; dUMP biosynthesis; dUMP from dCTP (dUTP route): step 2/2. Functionally, this enzyme is involved in nucleotide metabolism: it produces dUMP, the immediate precursor of thymidine nucleotides and it decreases the intracellular concentration of dUTP so that uracil cannot be incorporated into DNA. This Flavobacterium johnsoniae (strain ATCC 17061 / DSM 2064 / JCM 8514 / BCRC 14874 / CCUG 350202 / NBRC 14942 / NCIMB 11054 / UW101) (Cytophaga johnsonae) protein is Deoxyuridine 5'-triphosphate nucleotidohydrolase.